We begin with the raw amino-acid sequence, 74 residues long: DNA-directed RNA polymerase subunit omega (74 aa).

It belongs to the RNA polymerase subunit omega family. In terms of assembly, the RNAP catalytic core consists of 2 alpha, 1 beta, 1 beta' and 1 omega subunit. When a sigma factor is associated with the core the holoenzyme is formed, which can initiate transcription.

The catalysed reaction is RNA(n) + a ribonucleoside 5'-triphosphate = RNA(n+1) + diphosphate. Functionally, promotes RNA polymerase assembly. Latches the N- and C-terminal regions of the beta' subunit thereby facilitating its interaction with the beta and alpha subunits. This is DNA-directed RNA polymerase subunit omega from Campylobacter jejuni subsp. jejuni serotype O:6 (strain 81116 / NCTC 11828).